Consider the following 561-residue polypeptide: MACPF domain-containing protein CAD1 (561 aa).

Residues 11–314 form the MACPF domain; sequence VPSSEALTTT…PPIEDLQYFL (304 aa). The tract at residues 489 to 514 is disordered; it reads VASSGRLEPGGPSTSSSTEEVSGQSG. A compositionally biased stretch (polar residues) spans 500 to 513; that stretch reads PSTSSSTEEVSGQS.

This sequence belongs to the complement C6/C7/C8/C9 (TC 1.C.39) family. In terms of tissue distribution, mainly expressed in the vascular system.

In terms of biological role, negatively controls the salicylic acid (SA)-mediated pathway of programmed cell death in plant immunity. This is MACPF domain-containing protein CAD1 (CAD1) from Arabidopsis thaliana (Mouse-ear cress).